The following is a 292-amino-acid chain: MSERLSGHTLLVSLLATPIRHSLSPKMHNEAYAKLGLDYAYLAFEVGTEQLADAVQGIRALGIRGSNVSMPNKEAILPLLDDLSPAAELVGAVNTVVNKDGKGHLVGHITDGIGALRALADEGVSVKNKIITLAGVGGAGKAIAVQLAFDGAKEVRLFNRQATRLSSVQKLVTKLNQLTRTKVTLQDLEDQTAFKEAIRESHLFIDATSVGMKPLENLSLITDPELIRPDLVVFDIVYSPAETKLLAFARQHGAQKVINGLGMVLYQGAEAFKLITGQDMPVDAIKPLLGDE.

Shikimate contacts are provided by residues 22–24 (SLS) and S69. The active-site Proton acceptor is K73. Positions 94 and 111 each coordinate shikimate. Residues 135–139 (GVGGA) and I236 each bind NADP(+). Shikimate is bound at residue Y238. G260 is a binding site for NADP(+).

The protein belongs to the shikimate dehydrogenase family. Homodimer.

It catalyses the reaction shikimate + NADP(+) = 3-dehydroshikimate + NADPH + H(+). It participates in metabolic intermediate biosynthesis; chorismate biosynthesis; chorismate from D-erythrose 4-phosphate and phosphoenolpyruvate: step 4/7. In terms of biological role, involved in the biosynthesis of the chorismate, which leads to the biosynthesis of aromatic amino acids. Catalyzes the reversible NADPH linked reduction of 3-dehydroshikimate (DHSA) to yield shikimate (SA). The chain is Shikimate dehydrogenase (NADP(+)) from Streptococcus pyogenes serotype M3 (strain ATCC BAA-595 / MGAS315).